The following is a 371-amino-acid chain: tRNA-specific 2-thiouridylase MnmA (371 aa).

ATP contacts are provided by residues 16–23 (GMSGGVDS) and methionine 42. Residues 102 to 104 (NPD) form an interaction with target base in tRNA region. The Nucleophile role is filled by cysteine 107. A disulfide bridge connects residues cysteine 107 and cysteine 204. Glycine 132 is an ATP binding site. The segment at 154-156 (KDQ) is interaction with tRNA. The Cysteine persulfide intermediate role is filled by cysteine 204. The interaction with tRNA stretch occupies residues 316-317 (RY).

The protein belongs to the MnmA/TRMU family.

The protein resides in the cytoplasm. The enzyme catalyses S-sulfanyl-L-cysteinyl-[protein] + uridine(34) in tRNA + AH2 + ATP = 2-thiouridine(34) in tRNA + L-cysteinyl-[protein] + A + AMP + diphosphate + H(+). Its function is as follows. Catalyzes the 2-thiolation of uridine at the wobble position (U34) of tRNA, leading to the formation of s(2)U34. The polypeptide is tRNA-specific 2-thiouridylase MnmA (Shewanella halifaxensis (strain HAW-EB4)).